The following is a 493-amino-acid chain: Cysteine--tRNA ligase (493 aa).

A Zn(2+)-binding site is contributed by Cys29. Positions 31–41 (VTVYDLCHLGH) match the 'HIGH' region motif. 3 residues coordinate Zn(2+): Cys213, His238, and Glu242. Residues 270–274 (KMSKS) carry the 'KMSKS' region motif. Position 273 (Lys273) interacts with ATP.

It belongs to the class-I aminoacyl-tRNA synthetase family. In terms of assembly, monomer. It depends on Zn(2+) as a cofactor.

It localises to the cytoplasm. It carries out the reaction tRNA(Cys) + L-cysteine + ATP = L-cysteinyl-tRNA(Cys) + AMP + diphosphate. This chain is Cysteine--tRNA ligase, found in Parasynechococcus marenigrum (strain WH8102).